The sequence spans 217 residues: tRNA (guanine-N(7)-)-methyltransferase (217 aa).

Positions 44, 69, 96, and 118 each coordinate S-adenosyl-L-methionine. Asp-118 is an active-site residue. Substrate-binding positions include Lys-122, Asp-154, and 191–194; that span reads TEYE.

The protein belongs to the class I-like SAM-binding methyltransferase superfamily. TrmB family.

It catalyses the reaction guanosine(46) in tRNA + S-adenosyl-L-methionine = N(7)-methylguanosine(46) in tRNA + S-adenosyl-L-homocysteine. It functions in the pathway tRNA modification; N(7)-methylguanine-tRNA biosynthesis. In terms of biological role, catalyzes the formation of N(7)-methylguanine at position 46 (m7G46) in tRNA. This chain is tRNA (guanine-N(7)-)-methyltransferase, found in Bacillus anthracis (strain CDC 684 / NRRL 3495).